A 428-amino-acid polypeptide reads, in one-letter code: MFVDQVKIYVKGGDGGNGMVAYRREKYVPKGGPAGGDGGKGADVVFVVEEGLRTLMDFRYQRHFKADRGQHGMSKGQHGRKSEDLIVKVPPGTVVKDEKTGQILADLVTHGQTAVIAKGGRGGRGNSRFATATNPAPEIAENGEPGQERDVILELKVLADVGLVGFPSVGKSTLLSVVSSARPKIAEYHFTTIVPNLGVVETGDNRSFVMADLPGLIEGAHAGVGLGHQFLRHIERTRVIVHVIDMSGLEGRDPYEDYVTINNELKEYNLRLTERPQVVVANKMDMPDAEENLQAFKEKVGDEVKIFPISAVTKQGVRDLLFEVANLLETTPEFPIHEVADESDTSVMYKLETEGVKFDITRESDGTFVISGYDIEKTFKMTDFSRDESVRRFARQMRGMGIDEALRARGAKDGDIVKILEYEFEFID.

The region spanning 1 to 158 (MFVDQVKIYV…RDVILELKVL (158 aa)) is the Obg domain. Residues 159 to 329 (ADVGLVGFPS…LLFEVANLLE (171 aa)) enclose the OBG-type G domain. GTP-binding positions include 165 to 172 (GFPSVGKS), 190 to 194 (FTTIV), 212 to 215 (DLPG), 282 to 285 (NKMD), and 310 to 312 (SAV). Mg(2+) contacts are provided by S172 and T192. In terms of domain architecture, OCT spans 350-428 (KLETEGVKFD…ILEYEFEFID (79 aa)).

It belongs to the TRAFAC class OBG-HflX-like GTPase superfamily. OBG GTPase family. Monomer. It depends on Mg(2+) as a cofactor.

It is found in the cytoplasm. Its function is as follows. An essential GTPase which binds GTP, GDP and possibly (p)ppGpp with moderate affinity, with high nucleotide exchange rates and a fairly low GTP hydrolysis rate. Plays a role in control of the cell cycle, stress response, ribosome biogenesis and in those bacteria that undergo differentiation, in morphogenesis control. This chain is GTPase Obg, found in Bacillus cereus (strain Q1).